A 176-amino-acid polypeptide reads, in one-letter code: Small ribosomal subunit protein uS5 (176 aa).

The 64-residue stretch at 11-74 (LSEVLVDVNR…QAAKKRMMKV (64 aa)) folds into the S5 DRBM domain.

Belongs to the universal ribosomal protein uS5 family. Part of the 30S ribosomal subunit. Contacts proteins S4 and S8.

With S4 and S12 plays an important role in translational accuracy. Functionally, located at the back of the 30S subunit body where it stabilizes the conformation of the head with respect to the body. The protein is Small ribosomal subunit protein uS5 of Rickettsia akari (strain Hartford).